We begin with the raw amino-acid sequence, 123 residues long: Venom protein 29 (123 aa).

Positions 1–18 (MNKLFLFTLLVTLWSVKG) are cleaved as a signal peptide.

Post-translationally, contains 3 disulfide bonds. As to expression, expressed by the venom gland.

It localises to the secreted. This chain is Venom protein 29, found in Lychas mucronatus (Chinese swimming scorpion).